The chain runs to 248 residues: Large ribosomal subunit protein uL1 (248 aa).

It belongs to the universal ribosomal protein uL1 family. In terms of assembly, part of the 50S ribosomal subunit.

Its function is as follows. Binds directly to 23S rRNA. The L1 stalk is quite mobile in the ribosome, and is involved in E site tRNA release. Protein L1 is also a translational repressor protein, it controls the translation of the L11 operon by binding to its mRNA. The polypeptide is Large ribosomal subunit protein uL1 (Orientia tsutsugamushi (strain Boryong) (Rickettsia tsutsugamushi)).